The primary structure comprises 211 residues: Octanoyltransferase (211 aa).

One can recognise a BPL/LPL catalytic domain in the interval 32–211 (DHEPEIIYLV…IQTEFNKIFK (180 aa)). Residues 71–78 (RGGKFTFH), 145–147 (AIG), and 158–160 (GVA) each bind substrate. Cysteine 176 (acyl-thioester intermediate) is an active-site residue.

It belongs to the LipB family.

It is found in the cytoplasm. It catalyses the reaction octanoyl-[ACP] + L-lysyl-[protein] = N(6)-octanoyl-L-lysyl-[protein] + holo-[ACP] + H(+). It functions in the pathway protein modification; protein lipoylation via endogenous pathway; protein N(6)-(lipoyl)lysine from octanoyl-[acyl-carrier-protein]: step 1/2. Catalyzes the transfer of endogenously produced octanoic acid from octanoyl-acyl-carrier-protein onto the lipoyl domains of lipoate-dependent enzymes. Lipoyl-ACP can also act as a substrate although octanoyl-ACP is likely to be the physiological substrate. The polypeptide is Octanoyltransferase (Rickettsia massiliae (strain Mtu5)).